Here is a 369-residue protein sequence, read N- to C-terminus: Homoserine O-succinyltransferase (369 aa).

Positions 90-93 (GISA) are important for substrate specificity. Residues 107–353 (WWSGAVGVRA…YGHDAFLKED (247 aa)) enclose the AB hydrolase-1 domain. S175 acts as the Nucleophile in catalysis. A substrate-binding site is contributed by R236. Catalysis depends on residues D316 and H346. A substrate-binding site is contributed by D347.

The protein belongs to the AB hydrolase superfamily. MetX family. In terms of assembly, homodimer.

The protein resides in the cytoplasm. The enzyme catalyses L-homoserine + succinyl-CoA = O-succinyl-L-homoserine + CoA. It participates in amino-acid biosynthesis; L-methionine biosynthesis via de novo pathway; O-succinyl-L-homoserine from L-homoserine: step 1/1. In terms of biological role, transfers a succinyl group from succinyl-CoA to L-homoserine, forming succinyl-L-homoserine. The sequence is that of Homoserine O-succinyltransferase from Brevundimonas diminuta (strain ATCC 11568 / DSM 7234 / NBRC 12697 / NCIMB 9393 / NCTC 8545).